A 678-amino-acid chain; its full sequence is Protein mono-ADP-ribosyltransferase PARP15 (678 aa).

Residues 1–19 (MAAPGPLPAAALSPGAPTP) show a composition bias toward low complexity. The segment at 1–67 (MAAPGPLPAA…SSRSMSRDNK (67 aa)) is disordered. The segment covering 49–58 (GARKASRRSS) has biased composition (basic residues). 2 consecutive Macro domains span residues 78–267 (NVVA…TNWS) and 293–464 (CFTA…KKRD). Substrate-binding positions include 312–313 (DI), 324–325 (ST), Arg-331, Val-335, 409–413 (GTGNA), and Gln-449. Positions 482–678 (LPEHWTDMNH…YPEYLITFTA (197 aa)) constitute a PARP catalytic domain.

Belongs to the ARTD/PARP family.

The protein resides in the nucleus. It carries out the reaction L-aspartyl-[protein] + NAD(+) = 4-O-(ADP-D-ribosyl)-L-aspartyl-[protein] + nicotinamide. The enzyme catalyses L-glutamyl-[protein] + NAD(+) = 5-O-(ADP-D-ribosyl)-L-glutamyl-[protein] + nicotinamide. Mono-ADP-ribosyltransferase that mediates mono-ADP-ribosylation of target proteins. Acts as a negative regulator of transcription. The polypeptide is Protein mono-ADP-ribosyltransferase PARP15 (Homo sapiens (Human)).